We begin with the raw amino-acid sequence, 875 residues long: MSDLAREITPVNIEEELKSSYLDYAMSVIVGRALPDVRDGLKPVHRRVLYAMNVLGNDWNKAYKKSARVVGDVIGKYHPHGDSAVYDTIVRMAQPFSLRYMLVDGQGNFGSIDGDSAAAMRYTEIRLAKIAHELMADLEKETVDFVDNYDGTEKIPDVMPTKIPNLLVNGSSGIAVGMATNIPPHNLTEVINGCLAYIDDEDISIEGLMEHIPGPDFPTAAIINGRRGIEEAYRTGRGKVYIRARAEVEVDAKTGRETIIVHEIPYQVNKARLIEKIAELVKEKRVEGISALRDESDKDGMRIVIEVKRDAVGEVVLNNLYSQTQLQVSFGINMVALHHGQPKIMNLKDIIAAFVRHRREVVTRRTIFELRKARDRAHILEALAVALANIDPIIELIRHAPTPAEAKTALVANPWQLGNVAAMLERAGDDAARPEWLEPEFGVRDGLYYLTEQQAQAILDLRLQKLTGLEHEKLLDEYKELLDQIAELLRILGSADRLMEVIREELELVREQFGDKRRTEITANSADINLEDLITQEDVVVTLSHQGYVKYQPLSEYEAQRRGGKGKSAARIKEEDFIDRLLVANTHDHILCFSSRGRVYSMKVYQLPEATRGARGRPIVNLLPLEQDERITAILPVTEFEEGVKVFMATANGTVKKTVLTEFNRLRTAGKVAIKLVDGDELIGVDLTSGEDEVMLFSAEGKVVRFKESSVRAMGCNTTGVRGIRLGEGDKVVSLIVPRGDGAILTATQNGYGKRTAVAEYPTKSRATKGVISIKVTERNGLVVGAVQVDDCDQIMMITDAGTLVRTRVSEISIVGRNTQGVILIRTAEDENVVGLQRVAEPVDEEDLDTIDGSAAEGDDEIAPEVDVDDEPEEE.

Residues 34–533 (LPDVRDGLKP…NSADINLEDL (500 aa)) enclose the Topo IIA-type catalytic domain. Tyrosine 122 acts as the O-(5'-phospho-DNA)-tyrosine intermediate in catalysis. A GyrA-box motif is present at residues 560 to 566 (QRRGGKG). Residues 841–875 (EPVDEEDLDTIDGSAAEGDDEIAPEVDVDDEPEEE) form a disordered region. Residues 857 to 875 (EGDDEIAPEVDVDDEPEEE) are compositionally biased toward acidic residues.

The protein belongs to the type II topoisomerase GyrA/ParC subunit family. As to quaternary structure, heterotetramer, composed of two GyrA and two GyrB chains. In the heterotetramer, GyrA contains the active site tyrosine that forms a transient covalent intermediate with DNA, while GyrB binds cofactors and catalyzes ATP hydrolysis.

It is found in the cytoplasm. The enzyme catalyses ATP-dependent breakage, passage and rejoining of double-stranded DNA.. Its function is as follows. A type II topoisomerase that negatively supercoils closed circular double-stranded (ds) DNA in an ATP-dependent manner to modulate DNA topology and maintain chromosomes in an underwound state. Negative supercoiling favors strand separation, and DNA replication, transcription, recombination and repair, all of which involve strand separation. Also able to catalyze the interconversion of other topological isomers of dsDNA rings, including catenanes and knotted rings. Type II topoisomerases break and join 2 DNA strands simultaneously in an ATP-dependent manner. The chain is DNA gyrase subunit A from Shigella flexneri.